The following is a 311-amino-acid chain: tRNA dimethylallyltransferase (311 aa).

9-16 serves as a coordination point for ATP; sequence GPTAVGKT. Position 11 to 16 (11 to 16) interacts with substrate; that stretch reads TAVGKT. Residues 34–37 are interaction with substrate tRNA; the sequence is DSMQ.

This sequence belongs to the IPP transferase family. Monomer. Requires Mg(2+) as cofactor.

The enzyme catalyses adenosine(37) in tRNA + dimethylallyl diphosphate = N(6)-dimethylallyladenosine(37) in tRNA + diphosphate. Functionally, catalyzes the transfer of a dimethylallyl group onto the adenine at position 37 in tRNAs that read codons beginning with uridine, leading to the formation of N6-(dimethylallyl)adenosine (i(6)A). This is tRNA dimethylallyltransferase from Clostridium botulinum (strain Langeland / NCTC 10281 / Type F).